The sequence spans 431 residues: MGKNVVVLGTQWGDEGKGKIVDLLTEQAKYVVRYQGGHNAGHTLVIDGDKTVLHLIPSGILRDNVKCIIGNGVVLAPDALMTEINMLKERGVPVEERLLISEACPLILPFHCALDVAREKARGNNAIGTTGRGIGPAYEDKVSRRGLRVGDLFDAELFATKLKEVMAYHNFMLTEYYKCEAVDYEETLKDALAIADYLKSMCTDVSELLDQARKAGEPILFEGAQGTLLDIDHGTYPFVTSSNTTAGGVATGSGFGPRHLDYVLGIMKAYTTRVGAGPFPTELKNEIGDYLGTKGHEFGATTGRKRRPGWLDVVAMKRAVQINSVSGFCLTKLDVLDGLEEVKICVGYQYPDGTVATTTPLAAEGYEKVTPVLETMPGWSETTFGATSVEQLPQAALNYIKRLEELLETPIDIISTGPDRNETMILVNPFS.

GTP is bound by residues 13–19 (GDEGKGK) and 41–43 (GHT). The active-site Proton acceptor is aspartate 14. Mg(2+) is bound by residues aspartate 14 and glycine 41. Residues 14 to 17 (DEGK), 39 to 42 (NAGH), threonine 130, arginine 144, glutamine 225, threonine 240, and arginine 304 contribute to the IMP site. Catalysis depends on histidine 42, which acts as the Proton donor. 300–306 (ATTGRKR) contacts substrate. Residues arginine 306, 332–334 (KLD), and 415–417 (STG) contribute to the GTP site.

The protein belongs to the adenylosuccinate synthetase family. As to quaternary structure, homodimer. The cofactor is Mg(2+).

It localises to the cytoplasm. It carries out the reaction IMP + L-aspartate + GTP = N(6)-(1,2-dicarboxyethyl)-AMP + GDP + phosphate + 2 H(+). It participates in purine metabolism; AMP biosynthesis via de novo pathway; AMP from IMP: step 1/2. Functionally, plays an important role in the de novo pathway of purine nucleotide biosynthesis. Catalyzes the first committed step in the biosynthesis of AMP from IMP. This is Adenylosuccinate synthetase from Shewanella halifaxensis (strain HAW-EB4).